A 268-amino-acid polypeptide reads, in one-letter code: Tryptophan synthase alpha chain (268 aa).

Active-site proton acceptor residues include E49 and D60.

Belongs to the TrpA family. As to quaternary structure, tetramer of two alpha and two beta chains.

It carries out the reaction (1S,2R)-1-C-(indol-3-yl)glycerol 3-phosphate + L-serine = D-glyceraldehyde 3-phosphate + L-tryptophan + H2O. It functions in the pathway amino-acid biosynthesis; L-tryptophan biosynthesis; L-tryptophan from chorismate: step 5/5. Functionally, the alpha subunit is responsible for the aldol cleavage of indoleglycerol phosphate to indole and glyceraldehyde 3-phosphate. The sequence is that of Tryptophan synthase alpha chain from Photorhabdus laumondii subsp. laumondii (strain DSM 15139 / CIP 105565 / TT01) (Photorhabdus luminescens subsp. laumondii).